The sequence spans 340 residues: Aspartate-semialdehyde dehydrogenase (340 aa).

Residues 11–14 (TGEV) and 39–40 (RS) each bind NADP(+). Position 100 (arginine 100) interacts with phosphate. The Acyl-thioester intermediate role is filled by cysteine 131. Glutamine 158 provides a ligand contact to substrate. 161–162 (SG) contacts NADP(+). Phosphate is bound at residue lysine 216. Arginine 238 is a substrate binding site. Histidine 245 functions as the Proton acceptor in the catalytic mechanism. NADP(+) is bound at residue asparagine 318.

It belongs to the aspartate-semialdehyde dehydrogenase family. In terms of assembly, homodimer.

It catalyses the reaction L-aspartate 4-semialdehyde + phosphate + NADP(+) = 4-phospho-L-aspartate + NADPH + H(+). Its pathway is amino-acid biosynthesis; L-lysine biosynthesis via DAP pathway; (S)-tetrahydrodipicolinate from L-aspartate: step 2/4. It participates in amino-acid biosynthesis; L-methionine biosynthesis via de novo pathway; L-homoserine from L-aspartate: step 2/3. It functions in the pathway amino-acid biosynthesis; L-threonine biosynthesis; L-threonine from L-aspartate: step 2/5. In terms of biological role, catalyzes the NADPH-dependent formation of L-aspartate-semialdehyde (L-ASA) by the reductive dephosphorylation of L-aspartyl-4-phosphate. In Aquifex aeolicus (strain VF5), this protein is Aspartate-semialdehyde dehydrogenase.